Consider the following 528-residue polypeptide: Glutamyl-tRNA(Gln) amidotransferase subunit B, mitochondrial (528 aa).

Belongs to the GatB/GatE family. GatB subfamily. As to quaternary structure, subunit of the heterotrimeric GatFAB amidotransferase (AdT) complex, composed of A, B and F subunits.

Its subcellular location is the mitochondrion. It carries out the reaction L-glutamyl-tRNA(Gln) + L-glutamine + ATP + H2O = L-glutaminyl-tRNA(Gln) + L-glutamate + ADP + phosphate + H(+). Its function is as follows. Allows the formation of correctly charged Gln-tRNA(Gln) through the transamidation of misacylated Glu-tRNA(Gln) in the mitochondria. The reaction takes place in the presence of glutamine and ATP through an activated gamma-phospho-Glu-tRNA(Gln). In Clavispora lusitaniae (strain ATCC 42720) (Yeast), this protein is Glutamyl-tRNA(Gln) amidotransferase subunit B, mitochondrial.